The sequence spans 693 residues: Elongation factor G (693 aa).

The tr-type G domain occupies 8-282 (EKTRNIGIMA…AVIDYLPSPL (275 aa)). GTP contacts are provided by residues 17–24 (AHVDAGKT), 81–85 (DTPGH), and 135–138 (NKMD).

Belongs to the TRAFAC class translation factor GTPase superfamily. Classic translation factor GTPase family. EF-G/EF-2 subfamily.

The protein localises to the cytoplasm. Its function is as follows. Catalyzes the GTP-dependent ribosomal translocation step during translation elongation. During this step, the ribosome changes from the pre-translocational (PRE) to the post-translocational (POST) state as the newly formed A-site-bound peptidyl-tRNA and P-site-bound deacylated tRNA move to the P and E sites, respectively. Catalyzes the coordinated movement of the two tRNA molecules, the mRNA and conformational changes in the ribosome. This Streptococcus suis (strain 05ZYH33) protein is Elongation factor G.